We begin with the raw amino-acid sequence, 345 residues long: Dimethyladenosine transferase 1, mitochondrial (345 aa).

The transit peptide at 1–27 directs the protein to the mitochondrion; it reads MAASGKLGTFRLPPLPTIREIIKLFGL. S-adenosyl-L-methionine contacts are provided by residues 35 to 38, N36, L38, G63, E85, D111, and N141; that span reads QNFL.

It belongs to the class I-like SAM-binding methyltransferase superfamily. rRNA adenine N(6)-methyltransferase family. KsgA subfamily. Interacts with mitochondrial RNA polymerase POLRMT. Interacts with TFAM.

It localises to the mitochondrion. S-adenosyl-L-methionine-dependent methyltransferase which specifically dimethylates mitochondrial 12S rRNA at the conserved stem loop. Also required for basal transcription of mitochondrial DNA, probably via its interaction with POLRMT and TFAM. Stimulates transcription independently of the methyltransferase activity. The sequence is that of Dimethyladenosine transferase 1, mitochondrial (Tfb1m) from Rattus norvegicus (Rat).